Consider the following 291-residue polypeptide: Hydroxysteroid 11-beta-dehydrogenase 1-like protein B (291 aa).

The N-terminal stretch at 1-17 (MAGVILLLLSLCVGYIA) is a signal peptide. Residues 40–66 (GSST…TARR), 91–92 (DM), and 118–120 (NHI) contribute to the NADP(+) site. Ser170 contacts substrate. The active-site Proton acceptor is the Tyr183. NADP(+) contacts are provided by residues 183-187 (YCASK) and 216-222 (GYIDTEN).

It belongs to the short-chain dehydrogenases/reductases (SDR) family.

It is found in the secreted. It carries out the reaction cortisone + NADPH + H(+) = cortisol + NADP(+). In terms of biological role, unidirectional NADP(+)-dependent cortisol dehydrogenase (in vitro). The polypeptide is Hydroxysteroid 11-beta-dehydrogenase 1-like protein B (hsd11b1l-b) (Xenopus laevis (African clawed frog)).